The primary structure comprises 245 residues: Probable phosphatase YcdX (245 aa).

Residues histidine 7, histidine 9, histidine 15, histidine 40, glutamate 73, histidine 101, histidine 131, aspartate 192, and histidine 194 each contribute to the Zn(2+) site.

The protein belongs to the PHP family. Homotrimer. Zn(2+) is required as a cofactor.

This Escherichia fergusonii (strain ATCC 35469 / DSM 13698 / CCUG 18766 / IAM 14443 / JCM 21226 / LMG 7866 / NBRC 102419 / NCTC 12128 / CDC 0568-73) protein is Probable phosphatase YcdX.